Here is a 262-residue protein sequence, read N- to C-terminus: Dehydrin COR410 (262 aa).

2 disordered regions span residues 1 to 153 and 187 to 262; these read MEDE…HDTD and LPGG…KPSA. Composition is skewed to basic and acidic residues over residues 34–45 and 53–74; these read KKAEEDKEKEEE and VSVE…KETL. The segment covering 89 to 101 has biased composition (acidic residues); the sequence is SDEEEEEVIDDNG. 2 repeat units span residues 106-126 and 173-193. The segment at 106 to 245 is 3 X 21 AA repeats, Lys-rich; it reads RKKKKGLKEK…MDKLPGYHKT (140 aa). Basic and acidic residues-rich tracts occupy residues 113 to 130 and 187 to 196; these read KEKL…EGEH and LPGGHKKPED. A compositionally biased stretch (low complexity) spans 197–209; that stretch reads AAAVPVTHAAPAP. Residues 225-245 form repeat 3; it reads AKEKKGLLGKIMDKLPGYHKT. Over residues 244–262 the composition is skewed to basic and acidic residues; that stretch reads KTGEEDKAAAATGEHKPSA.

In terms of tissue distribution, expressed in roots, crown and leaves during cold acclimation.

The sequence is that of Dehydrin COR410 (COR410) from Triticum aestivum (Wheat).